We begin with the raw amino-acid sequence, 234 residues long: Thymidylate kinase (234 aa).

10 to 17 contributes to the ATP binding site; the sequence is GGEGSGKT.

This sequence belongs to the thymidylate kinase family.

It catalyses the reaction dTMP + ATP = dTDP + ADP. Its function is as follows. Phosphorylation of dTMP to form dTDP in both de novo and salvage pathways of dTTP synthesis. This Cyanothece sp. (strain PCC 7425 / ATCC 29141) protein is Thymidylate kinase.